Consider the following 121-residue polypeptide: Large ribosomal subunit protein bL19 (121 aa).

The protein belongs to the bacterial ribosomal protein bL19 family.

In terms of biological role, this protein is located at the 30S-50S ribosomal subunit interface and may play a role in the structure and function of the aminoacyl-tRNA binding site. This is Large ribosomal subunit protein bL19 from Neisseria gonorrhoeae (strain ATCC 700825 / FA 1090).